The primary structure comprises 104 residues: Large ribosomal subunit protein bL21 (104 aa).

It belongs to the bacterial ribosomal protein bL21 family. Part of the 50S ribosomal subunit. Contacts protein L20.

This protein binds to 23S rRNA in the presence of protein L20. In Francisella tularensis subsp. tularensis (strain FSC 198), this protein is Large ribosomal subunit protein bL21.